We begin with the raw amino-acid sequence, 157 residues long: ATP synthase subunit b (157 aa).

The helical transmembrane segment at 7-29 (MFGQLIMFTMFTWFCMKFVWPPI) threads the bilayer.

This sequence belongs to the ATPase B chain family. In terms of assembly, F-type ATPases have 2 components, F(1) - the catalytic core - and F(0) - the membrane proton channel. F(1) has five subunits: alpha(3), beta(3), gamma(1), delta(1), epsilon(1). F(0) has three main subunits: a(1), b(2) and c(10-14). The alpha and beta chains form an alternating ring which encloses part of the gamma chain. F(1) is attached to F(0) by a central stalk formed by the gamma and epsilon chains, while a peripheral stalk is formed by the delta and b chains.

It is found in the cell inner membrane. Functionally, f(1)F(0) ATP synthase produces ATP from ADP in the presence of a proton or sodium gradient. F-type ATPases consist of two structural domains, F(1) containing the extramembraneous catalytic core and F(0) containing the membrane proton channel, linked together by a central stalk and a peripheral stalk. During catalysis, ATP synthesis in the catalytic domain of F(1) is coupled via a rotary mechanism of the central stalk subunits to proton translocation. In terms of biological role, component of the F(0) channel, it forms part of the peripheral stalk, linking F(1) to F(0). The protein is ATP synthase subunit b of Ruthia magnifica subsp. Calyptogena magnifica.